Here is a 385-residue protein sequence, read N- to C-terminus: Methionine aminopeptidase 1 (385 aa).

A C6H2-type zinc finger spans residues 6-59; the sequence is SRVCETEGCSSEAKLQCPTCIKLGIQGSYFCSQECFKGSWATHKLLHKKAKDDK. Zn(2+)-binding residues include cysteine 9, cysteine 14, cysteine 22, cysteine 25, cysteine 36, cysteine 40, histidine 48, and histidine 52. Residue histidine 203 participates in a protein binding. Zn(2+) contacts are provided by aspartate 220, aspartate 231, and histidine 294. Histidine 301 is an a protein binding site. Zn(2+) is bound by residues glutamate 327 and glutamate 358.

The protein belongs to the peptidase M24A family. Methionine aminopeptidase type 1 subfamily. In terms of assembly, associates with the 60S ribosomal subunit of the 80S translational complex. Requires Zn(2+) as cofactor. Co(2+) is required as a cofactor. The cofactor is Mn(2+). Fe(2+) serves as cofactor.

Its subcellular location is the cytoplasm. It carries out the reaction Release of N-terminal amino acids, preferentially methionine, from peptides and arylamides.. Cotranslationally removes the N-terminal methionine from nascent proteins. The N-terminal methionine is often cleaved when the second residue in the primary sequence is small and uncharged (Met-Ala-, Cys, Gly, Pro, Ser, Thr, or Val). This is Methionine aminopeptidase 1 (metap1) from Xenopus laevis (African clawed frog).